Here is a 147-residue protein sequence, read N- to C-terminus: DNA base-flipping protein (147 aa).

Belongs to the MGMT family. ATL subfamily. As to quaternary structure, interacts with several proteins, including UvrA, UvrD and the three subunits of the RNA polymerase.

In terms of biological role, involved in DNA damage recognition. Binds DNA containing O(6)-methylguanine and larger O(6)-alkylguanine adducts. Binds to the damaged base and flips the base out of the DNA duplex into an extrahelical conformation, which allows processing by repair proteins. Also affects the regulation of gene expression in response to alkylation. The chain is DNA base-flipping protein from Thermus thermophilus (strain ATCC 27634 / DSM 579 / HB8).